The chain runs to 307 residues: Carbamate kinase (307 aa).

Belongs to the carbamate kinase family.

Its subcellular location is the cytoplasm. The catalysed reaction is hydrogencarbonate + NH4(+) + ATP = carbamoyl phosphate + ADP + H2O + H(+). The protein operates within metabolic intermediate metabolism; carbamoyl phosphate degradation; CO(2) and NH(3) from carbamoyl phosphate: step 1/1. In terms of biological role, carbamate kinase involved in the arginine deiminase pathway of fermentative arginine utilization. The sequence is that of Carbamate kinase (arcC) from Halobacterium salinarum (strain ATCC 700922 / JCM 11081 / NRC-1) (Halobacterium halobium).